A 463-amino-acid polypeptide reads, in one-letter code: Nuclear hormone receptor family member nhr-79 (463 aa).

Positions 3 to 81 (RGKCMVCDSP…AGMMRDLVQA (79 aa)) form a DNA-binding region, nuclear receptor. 2 NR C4-type zinc fingers span residues 6 to 27 (CMVC…CKAC) and 43 to 64 (CLGD…CRHC). The interval 83–119 (REIKSDKGKNSRNSSQSEDFFSPPPEQPGPSNYFDQF) is disordered. One can recognise an NR LBD domain in the interval 203–463 (YTEQVINLNM…ILKDMLKFQY (261 aa)).

This sequence belongs to the nuclear hormone receptor family.

Its subcellular location is the nucleus. In terms of biological role, orphan nuclear receptor. This Caenorhabditis elegans protein is Nuclear hormone receptor family member nhr-79 (nhr-79).